Here is a 288-residue protein sequence, read N- to C-terminus: Ion-translocating oxidoreductase complex subunit D (288 aa).

The next 9 helical transmembrane spans lie at 26–46, 47–67, 80–100, 101–121, 126–146, 159–179, 200–220, 235–255, and 256–276; these read IVALLPISAAAVYFFGFAALG, NIIASILGAVGIEFVIQKAFN, LGLLLALICPPTLPAWMIFIG, GAFAVGVGKHAFGGIGSYTFH, AWVFLSLAWAQDMLPGTIPIL, GFLTDVSPILVLLAGVILILV, VLGDPLAYVVSGTFLLGVFFI, IVYGILCGFLTVIYGYFSGNY, and VWGTLYALLLSNAVAPFIELK.

Belongs to the NqrB/RnfD family. As to quaternary structure, the Rnf complex is probably composed of eight subunits, including RnfA, RnfB, RnfC, RnfD, RnfE and RnfG. Requires FMN as cofactor.

Its subcellular location is the cell membrane. In terms of biological role, part of a membrane-bound complex that couples electron transfer with translocation of ions across the membrane. Catalyzes Na(+) transport, most probably coupled to electron transfer from reduced ferredoxin to methanophenazine and heterodisulfide reductase. Involved in heterodisulfide reduction during methanogenesis from acetate. The polypeptide is Ion-translocating oxidoreductase complex subunit D (Methanosarcina acetivorans (strain ATCC 35395 / DSM 2834 / JCM 12185 / C2A)).